Consider the following 562-residue polypeptide: mRNA cleavage and polyadenylation factor CLP1 (562 aa).

The interval 1–27 (MSLPGLELSQQPIEARRAPPQPTQISL) is disordered. ATP is bound by residues Glu32, Lys71, and 154 to 159 (DAGKTS). The disordered stretch occupies residues 415 to 483 (EDEYDPSKFD…STTPFTNLPS (69 aa)). Residues 445 to 479 (SLQPPSGLLPGLRSELPSATTGFPSASTSSTTPFT) are compositionally biased toward low complexity.

It belongs to the Clp1 family. Clp1 subfamily. As to quaternary structure, component of a pre-mRNA cleavage factor complex. Interacts directly with PCF11.

It localises to the nucleus. Its function is as follows. Required for endonucleolytic cleavage during polyadenylation-dependent pre-mRNA 3'-end formation. The protein is mRNA cleavage and polyadenylation factor CLP1 of Coccidioides immitis (strain RS) (Valley fever fungus).